The sequence spans 343 residues: Phosphate acyltransferase (343 aa).

Belongs to the PlsX family. In terms of assembly, homodimer. Probably interacts with PlsY.

It localises to the cytoplasm. The enzyme catalyses a fatty acyl-[ACP] + phosphate = an acyl phosphate + holo-[ACP]. It functions in the pathway lipid metabolism; phospholipid metabolism. Catalyzes the reversible formation of acyl-phosphate (acyl-PO(4)) from acyl-[acyl-carrier-protein] (acyl-ACP). This enzyme utilizes acyl-ACP as fatty acyl donor, but not acyl-CoA. The chain is Phosphate acyltransferase from Coxiella burnetii (strain CbuG_Q212) (Coxiella burnetii (strain Q212)).